Reading from the N-terminus, the 440-residue chain is Replication factor C large subunit (440 aa).

48-55 (GPPGVGKT) contributes to the ATP binding site.

It belongs to the activator 1 small subunits family. RfcL subfamily. As to quaternary structure, heteromultimer composed of small subunits (RfcS) and large subunits (RfcL).

Its function is as follows. Part of the RFC clamp loader complex which loads the PCNA sliding clamp onto DNA. This Sulfurisphaera tokodaii (strain DSM 16993 / JCM 10545 / NBRC 100140 / 7) (Sulfolobus tokodaii) protein is Replication factor C large subunit.